The chain runs to 571 residues: Glutamate--tRNA ligase (571 aa).

The short motif at 38 to 48 (PSPTGFMHIGG) is the 'HIGH' region element. Positions 316-320 (KLSKR) match the 'KMSKS' region motif. K319 is an ATP binding site.

Belongs to the class-I aminoacyl-tRNA synthetase family. Glutamate--tRNA ligase type 1 subfamily. Monomer.

It is found in the cytoplasm. The catalysed reaction is tRNA(Glu) + L-glutamate + ATP = L-glutamyl-tRNA(Glu) + AMP + diphosphate. Its function is as follows. Catalyzes the attachment of glutamate to tRNA(Glu) in a two-step reaction: glutamate is first activated by ATP to form Glu-AMP and then transferred to the acceptor end of tRNA(Glu). The chain is Glutamate--tRNA ligase from Sorangium cellulosum (strain So ce56) (Polyangium cellulosum (strain So ce56)).